We begin with the raw amino-acid sequence, 376 residues long: Actin-related protein T1 (376 aa).

Belongs to the actin family.

The protein resides in the cytoplasm. The protein localises to the cytoskeleton. It is found in the nucleus. Its subcellular location is the cytoplasmic vesicle. It localises to the secretory vesicle. The protein resides in the acrosome. In terms of biological role, negatively regulates the Hedgehog (SHH) signaling. Binds to the promoter of the SHH signaling mediator, GLI1, and inhibits its expression. The sequence is that of Actin-related protein T1 (Actrt1) from Rattus norvegicus (Rat).